The primary structure comprises 500 residues: Glycogen synthase (500 aa).

Lys-20 provides a ligand contact to ADP-alpha-D-glucose.

It belongs to the glycosyltransferase 1 family. Bacterial/plant glycogen synthase subfamily.

The catalysed reaction is [(1-&gt;4)-alpha-D-glucosyl](n) + ADP-alpha-D-glucose = [(1-&gt;4)-alpha-D-glucosyl](n+1) + ADP + H(+). It participates in glycan biosynthesis; glycogen biosynthesis. Synthesizes alpha-1,4-glucan chains using ADP-glucose. This is Glycogen synthase from Desulforudis audaxviator (strain MP104C).